A 726-amino-acid polypeptide reads, in one-letter code: MSTTDDTHNTLSTGKCPFHQGGHDRSAGAGTASRDWWPNQLRVDLLNQHSNRSNPLGEDFDYRKEFSKLDYSALKGDLKALLTDSQPWWPADWGSYVGLFIRMAWHGAGTYRSIDGRGGAGRGQQRFAPLNSWPDNVSLDKARRLLWPIKQKYGQKISWADLFILAGNVALENSGFRTFGFGAGREDVWEPDLDVNWGDEKAWLTHRHPEALAKAPLGATEMGLIYVNPEGPDHSGEPLSAAAAIRATFGNMGMNDEETVALIAGGHTLGKTHGAAAASHVGADPEAAPIEAQGLGWASSYGSGVGADAITSGLEVVWTQTPTQWSNYFFENLFKYEWVQTRSPAGAIQFEAVDAPDIIPDPFDPSKKRKPTMLVTDLTLRFDPEFEKISRRFLNDPQAFNEAFARAWFKLTHRDMGPKARYIGPEVPKEDLIWQDPLPQPLYQPTQEDIINLKAAIAASGLSISEMVSVAWASASTFRGGDKRGGANGARLALAPQRDWEVNAVAARVLPVLEALQKTTNKASLADIIVLAGVVGIEQAAAAAGVSISVPFAPGRVDARQDQTDIEMFSLLEPIADGFRNYRARLDVSTTESLLIDKAQQLTLTAPEMTVLVGGMRVLGTNFDGSQNGVFTDRPGVLSTDFFANLLDMRYEWKPTDDANELFEGRDRLTGEVKYTATRADLVFGSNSVLRALAEVYACSDAHEKFVKDFVAAWVKVMNLDRFDLL.

Positions 1–33 are disordered; sequence MSTTDDTHNTLSTGKCPFHQGGHDRSAGAGTAS. Positions 105–226 form a cross-link, tryptophyl-tyrosyl-methioninium (Trp-Tyr) (with M-252); that stretch reads WHGAGTYRSI…LGATEMGLIY (122 aa). Catalysis depends on His-106, which acts as the Proton acceptor. A cross-link (tryptophyl-tyrosyl-methioninium (Tyr-Met) (with W-105)) is located at residues 226 to 252; it reads YVNPEGPDHSGEPLSAAAAIRATFGNM. His-267 lines the heme b pocket.

This sequence belongs to the peroxidase family. Peroxidase/catalase subfamily. As to quaternary structure, homodimer or homotetramer. It depends on heme b as a cofactor. Post-translationally, formation of the three residue Trp-Tyr-Met cross-link is important for the catalase, but not the peroxidase activity of the enzyme.

The enzyme catalyses H2O2 + AH2 = A + 2 H2O. It carries out the reaction 2 H2O2 = O2 + 2 H2O. Functionally, bifunctional enzyme with both catalase and broad-spectrum peroxidase activity. This is Catalase-peroxidase from Salmonella typhi.